Reading from the N-terminus, the 154-residue chain is Putative pre-16S rRNA nuclease (154 aa).

Belongs to the YqgF nuclease family.

It is found in the cytoplasm. Could be a nuclease involved in processing of the 5'-end of pre-16S rRNA. This Rickettsia bellii (strain OSU 85-389) protein is Putative pre-16S rRNA nuclease.